We begin with the raw amino-acid sequence, 133 residues long: Large ribosomal subunit protein bL19 (133 aa).

It belongs to the bacterial ribosomal protein bL19 family.

Its function is as follows. This protein is located at the 30S-50S ribosomal subunit interface and may play a role in the structure and function of the aminoacyl-tRNA binding site. In Stenotrophomonas maltophilia (strain K279a), this protein is Large ribosomal subunit protein bL19.